Reading from the N-terminus, the 271-residue chain is Thiazole synthase (271 aa).

Lys-95 functions as the Schiff-base intermediate with DXP in the catalytic mechanism. 1-deoxy-D-xylulose 5-phosphate contacts are provided by residues Gly-156, 182-183 (AG), and 204-205 (NT).

Belongs to the ThiG family. Homotetramer. Forms heterodimers with either ThiH or ThiS.

Its subcellular location is the cytoplasm. The enzyme catalyses [ThiS sulfur-carrier protein]-C-terminal-Gly-aminoethanethioate + 2-iminoacetate + 1-deoxy-D-xylulose 5-phosphate = [ThiS sulfur-carrier protein]-C-terminal Gly-Gly + 2-[(2R,5Z)-2-carboxy-4-methylthiazol-5(2H)-ylidene]ethyl phosphate + 2 H2O + H(+). It participates in cofactor biosynthesis; thiamine diphosphate biosynthesis. In terms of biological role, catalyzes the rearrangement of 1-deoxy-D-xylulose 5-phosphate (DXP) to produce the thiazole phosphate moiety of thiamine. Sulfur is provided by the thiocarboxylate moiety of the carrier protein ThiS. In vitro, sulfur can be provided by H(2)S. This is Thiazole synthase from Yersinia pestis.